We begin with the raw amino-acid sequence, 946 residues long: Multiple C2 and transmembrane domain-containing protein 1 (946 aa).

Disordered stretches follow at residues 28-193 (QLGV…QKSS) and 205-229 (LEPAPPPAEPARRPAEPQSLQKGEE). Over residues 31–43 (VGKGKGGGGGRAG) the composition is skewed to gly residues. The segment covering 87-96 (FSSSQPNLCC) has biased composition (polar residues). Residues 143–163 (PGGRSPDSAPSSSASSSLSSS) are compositionally biased toward low complexity. The span at 169 to 187 (RGDRIRDEGTRRGSPEAHL) shows a compositional bias: basic and acidic residues. C2 domains follow at residues 235–353 (KINP…DVTL), 399–516 (QTQS…KLEL), and 550–671 (HKER…AYVL). Asp270, Asp276, Asp323, Asp325, Asp331, Asp433, Asp439, Asp486, Asp488, Asp494, Asp589, Asp595, Asp641, Asp643, and Asp649 together coordinate Ca(2+). 2 helical membrane-spanning segments follow: residues 758–778 (FVLFLLVVWNFELYMIPLLLL) and 861–881 (PFLSWLAIIALCVFTAILYFI).

It belongs to the MCTP family. Ca(2+) is required as a cofactor. Expressed in the brain and central nervous system (at protein level). Isoform 1 and isoform 2 are expressed in the brain, kidney, liver, heart, lung, skeletal muscle, testis and spleen. Isoform 2 shows a higher expression in the brain, heart and skeletal muscle.

It is found in the cytoplasmic vesicle. The protein resides in the secretory vesicle. The protein localises to the synaptic vesicle membrane. It localises to the recycling endosome. Its subcellular location is the endoplasmic reticulum membrane. Functionally, calcium sensor which is essential for the stabilization of normal baseline neurotransmitter release and for the induction and long-term maintenance of presynaptic homeostatic plasticity. Overexpression in cultured neurons significantly inhibits neuronal transferrin endocytosis, secretory vesicle retrieval, cell migration, and oxidative stress from glutamate toxicity. This is Multiple C2 and transmembrane domain-containing protein 1 from Rattus norvegicus (Rat).